The primary structure comprises 489 residues: Ecdysteroid UDP-glucosyltransferase (489 aa).

The N-terminal stretch at 1–17 (MVFLIIALTLLATGARA) is a signal peptide.

This sequence belongs to the UDP-glycosyltransferase family.

In terms of biological role, catalyzes the transfer of glucose from UDP-glucose to ecdysteroids which are insect molting hormones. Expression of egt interferes with normal insect development and block molting. This Orgyia pseudotsugata (Douglas-fir tussock moth) protein is Ecdysteroid UDP-glucosyltransferase (EGT).